Reading from the N-terminus, the 295-residue chain is Protease HtpX (295 aa).

2 helical membrane-spanning segments follow: residues 4–24 and 34–54; these read IVLFLLTNLAVMLVFGIILSL and GLMIMAGLFGFGGAFVSLLMS. H139 serves as a coordination point for Zn(2+). Residue E140 is part of the active site. Residue H143 coordinates Zn(2+). The next 2 membrane-spanning stretches (helical) occupy residues 147–167 and 194–214; these read GDMVTMTLLQGIVNTFVIFIS and IVYMVASMVLEIVFGILASII. E223 lines the Zn(2+) pocket.

It belongs to the peptidase M48B family. It depends on Zn(2+) as a cofactor.

It is found in the cell inner membrane. The polypeptide is Protease HtpX (Photorhabdus laumondii subsp. laumondii (strain DSM 15139 / CIP 105565 / TT01) (Photorhabdus luminescens subsp. laumondii)).